The chain runs to 375 residues: Erythronate-4-phosphate dehydrogenase (375 aa).

2 residues coordinate substrate: Ser45 and Thr66. Residues Asp146, Thr175, 206–208 (ASR), and Asp232 contribute to the NAD(+) site. Residue Arg208 is part of the active site. Glu237 is a catalytic residue. His254 acts as the Proton donor in catalysis. NAD(+) is bound at residue Gly257. Tyr258 provides a ligand contact to substrate.

It belongs to the D-isomer specific 2-hydroxyacid dehydrogenase family. PdxB subfamily. Homodimer.

The protein localises to the cytoplasm. It catalyses the reaction 4-phospho-D-erythronate + NAD(+) = (R)-3-hydroxy-2-oxo-4-phosphooxybutanoate + NADH + H(+). The protein operates within cofactor biosynthesis; pyridoxine 5'-phosphate biosynthesis; pyridoxine 5'-phosphate from D-erythrose 4-phosphate: step 2/5. In terms of biological role, catalyzes the oxidation of erythronate-4-phosphate to 3-hydroxy-2-oxo-4-phosphonooxybutanoate. This Photorhabdus laumondii subsp. laumondii (strain DSM 15139 / CIP 105565 / TT01) (Photorhabdus luminescens subsp. laumondii) protein is Erythronate-4-phosphate dehydrogenase.